The following is an 80-amino-acid chain: Metallothionein-like protein type 2, MT2-22 (80 aa).

Belongs to the metallothionein superfamily. Type 15 family.

In terms of biological role, metallothioneins have a high content of cysteine residues that bind various heavy metals. This Brassica juncea (Indian mustard) protein is Metallothionein-like protein type 2, MT2-22.